Here is a 282-residue protein sequence, read N- to C-terminus: Light-independent protochlorophyllide reductase iron-sulfur ATP-binding protein (282 aa).

ATP is bound by residues 10–15 (GIGKST) and K39. S14 serves as a coordination point for Mg(2+). [4Fe-4S] cluster-binding residues include C95 and C129. 180 to 181 (NR) serves as a coordination point for ATP.

The protein belongs to the NifH/BchL/ChlL family. Homodimer. Protochlorophyllide reductase is composed of three subunits; ChlL, ChlN and ChlB. It depends on [4Fe-4S] cluster as a cofactor.

The protein resides in the plastid. The protein localises to the cyanelle. The enzyme catalyses chlorophyllide a + oxidized 2[4Fe-4S]-[ferredoxin] + 2 ADP + 2 phosphate = protochlorophyllide a + reduced 2[4Fe-4S]-[ferredoxin] + 2 ATP + 2 H2O. It functions in the pathway porphyrin-containing compound metabolism; chlorophyll biosynthesis (light-independent). In terms of biological role, component of the dark-operative protochlorophyllide reductase (DPOR) that uses Mg-ATP and reduced ferredoxin to reduce ring D of protochlorophyllide (Pchlide) to form chlorophyllide a (Chlide). This reaction is light-independent. The L component serves as a unique electron donor to the NB-component of the complex, and binds Mg-ATP. The polypeptide is Light-independent protochlorophyllide reductase iron-sulfur ATP-binding protein (Cyanophora paradoxa).